The following is a 143-amino-acid chain: Large ribosomal subunit protein uL16 (143 aa).

It belongs to the universal ribosomal protein uL16 family. As to quaternary structure, part of the 50S ribosomal subunit.

Its function is as follows. Binds 23S rRNA and is also seen to make contacts with the A and possibly P site tRNAs. In Caulobacter vibrioides (strain ATCC 19089 / CIP 103742 / CB 15) (Caulobacter crescentus), this protein is Large ribosomal subunit protein uL16.